A 395-amino-acid chain; its full sequence is GDP-mannose 4,6 dehydratase (395 aa).

Polar residues-rich tracts occupy residues 1-13 and 24-36; these read MLNT…STSD and ESSS…QNGT. Positions 1-44 are disordered; sequence MLNTRLIAMSTSDGAPETKKQRPESSSNGSKDQNGTEAGAEGDS. NADP(+) is bound by residues 53-58, 109-110, 131-135, and tyrosine 146; these read GITGQD, DM, and LAAQS. Residue threonine 178 is part of the active site. Residues glutamate 180 and tyrosine 202 each act as nucleophile in the active site. The NADP(+) site is built by lysine 206, histidine 232, and arginine 237.

The protein belongs to the NAD(P)-dependent epimerase/dehydratase family. GDP-mannose 4,6-dehydratase subfamily. The cofactor is NADP(+).

The enzyme catalyses GDP-alpha-D-mannose = GDP-4-dehydro-alpha-D-rhamnose + H2O. It functions in the pathway nucleotide-sugar biosynthesis; GDP-L-fucose biosynthesis via de novo pathway; GDP-L-fucose from GDP-alpha-D-mannose: step 1/2. Functionally, catalyzes the conversion of GDP-D-mannose to GDP-4-dehydro-6-deoxy-D-mannose (also known as GDP-4-keto-6-deoxy-D-mannose or GDP-4-dehydro-alpha-D-rhamnose), an essential step in the synthesis of GDP-fucose from GDP-mannose. This is GDP-mannose 4,6 dehydratase (Gmd) from Drosophila melanogaster (Fruit fly).